The chain runs to 295 residues: tRNA(Ile)-lysidine synthase (295 aa).

An ATP-binding site is contributed by Ser-10 to Ser-15.

It belongs to the tRNA(Ile)-lysidine synthase family.

The protein resides in the cytoplasm. The catalysed reaction is cytidine(34) in tRNA(Ile2) + L-lysine + ATP = lysidine(34) in tRNA(Ile2) + AMP + diphosphate + H(+). Its function is as follows. Ligates lysine onto the cytidine present at position 34 of the AUA codon-specific tRNA(Ile) that contains the anticodon CAU, in an ATP-dependent manner. Cytidine is converted to lysidine, thus changing the amino acid specificity of the tRNA from methionine to isoleucine. This chain is tRNA(Ile)-lysidine synthase, found in Malacoplasma penetrans (strain HF-2) (Mycoplasma penetrans).